Reading from the N-terminus, the 231-residue chain is MVREAGEVVAIVPAAGSGERLAVGVPKAFYQLDGQTLIERAVDGLLDSGVVDTVVVAVPADRTDEARQILGHRAMIVAGGSNRTDTVNLALTVLSGTAEPEFVLVHDAARALTPPALVARVVEALRDGYAAVVPVLPLSDTIKAVDANGVVLGTPERAGLRAVQTPQGFTTDLLLRSYQRGSLDLPAAEYTDDASLVEHIGGQVQVVDGDPLAFKITTKLDLLLAQAIVRG.

The protein belongs to the IspD/TarI cytidylyltransferase family. IspD subfamily.

The catalysed reaction is 2-C-methyl-D-erythritol 4-phosphate + CTP + H(+) = 4-CDP-2-C-methyl-D-erythritol + diphosphate. It participates in isoprenoid biosynthesis; isopentenyl diphosphate biosynthesis via DXP pathway; isopentenyl diphosphate from 1-deoxy-D-xylulose 5-phosphate: step 2/6. Catalyzes the formation of 4-diphosphocytidyl-2-C-methyl-D-erythritol from CTP and 2-C-methyl-D-erythritol 4-phosphate (MEP). The protein is 2-C-methyl-D-erythritol 4-phosphate cytidylyltransferase of Mycobacterium bovis (strain BCG / Pasteur 1173P2).